Consider the following 245-residue polypeptide: Small ribosomal subunit protein uS3 (245 aa).

Residues I38 to K106 form the KH type-2 domain. The tract at residues Y225–E245 is disordered. Positions V233–E245 are enriched in basic residues.

It belongs to the universal ribosomal protein uS3 family. In terms of assembly, part of the 30S ribosomal subunit. Forms a tight complex with proteins S10 and S14.

In terms of biological role, binds the lower part of the 30S subunit head. Binds mRNA in the 70S ribosome, positioning it for translation. This Azobacteroides pseudotrichonymphae genomovar. CFP2 protein is Small ribosomal subunit protein uS3.